Here is a 256-residue protein sequence, read N- to C-terminus: Uridylate kinase (256 aa).

ATP is bound at residue 10-13 (KLSG). G52 serves as a coordination point for UMP. 2 residues coordinate ATP: G53 and R57. UMP-binding positions include D72 and 134-141 (NGQPFLTT). 2 residues coordinate ATP: Y168 and D171.

It belongs to the UMP kinase family. Homohexamer.

The protein resides in the cytoplasm. It catalyses the reaction UMP + ATP = UDP + ADP. Its pathway is pyrimidine metabolism; CTP biosynthesis via de novo pathway; UDP from UMP (UMPK route): step 1/1. With respect to regulation, inhibited by UTP. Catalyzes the reversible phosphorylation of UMP to UDP. This Frankia alni (strain DSM 45986 / CECT 9034 / ACN14a) protein is Uridylate kinase.